Reading from the N-terminus, the 898-residue chain is Translation initiation factor IF-2 (898 aa).

2 disordered regions span residues 51-70 (RKSHGAEDEGSGKKITLKRK) and 114-303 (LAAE…KQHG). Basic and acidic residues-rich tracts occupy residues 114-171 (LAAE…EKSK) and 184-258 (PAKE…DDKG). The 170-residue stretch at 398–567 (HRAPVVTIMG…LLQSELLELQ (170 aa)) folds into the tr-type G domain. Positions 407 to 414 (GHVDHGKT) are G1. Residue 407–414 (GHVDHGKT) participates in GTP binding. The G2 stretch occupies residues 432–436 (GITQH). The tract at residues 453–456 (DTPG) is G3. GTP is bound by residues 453–457 (DTPGH) and 507–510 (NKID). The segment at 507–510 (NKID) is G4. The tract at residues 543–545 (SAH) is G5.

This sequence belongs to the TRAFAC class translation factor GTPase superfamily. Classic translation factor GTPase family. IF-2 subfamily.

It localises to the cytoplasm. Its function is as follows. One of the essential components for the initiation of protein synthesis. Protects formylmethionyl-tRNA from spontaneous hydrolysis and promotes its binding to the 30S ribosomal subunits. Also involved in the hydrolysis of GTP during the formation of the 70S ribosomal complex. This is Translation initiation factor IF-2 from Alcanivorax borkumensis (strain ATCC 700651 / DSM 11573 / NCIMB 13689 / SK2).